We begin with the raw amino-acid sequence, 236 residues long: Mitochondrial coenzyme A diphosphatase NUDT8 (236 aa).

The Nudix hydrolase domain occupies 25–172 (LRARPASAAV…HFRYTLPVFL (148 aa)). Residue Lys70 is modified to N6-succinyllysine. Positions 70 to 91 (KCDPADQDVVHTALRETREELG) match the Nudix box motif. Residues Glu85 and Glu89 each coordinate Mg(2+).

It belongs to the Nudix hydrolase family. Monomer. Mg(2+) serves as cofactor. Mn(2+) is required as a cofactor.

It is found in the mitochondrion. The enzyme catalyses an acyl-CoA + H2O = an acyl-4'-phosphopantetheine + adenosine 3',5'-bisphosphate + 2 H(+). It carries out the reaction CoA + H2O = (R)-4'-phosphopantetheine + adenosine 3',5'-bisphosphate + 2 H(+). The catalysed reaction is acetyl-CoA + H2O = S-acetyl-4'-phosphopantetheine + adenosine 3',5'-bisphosphate + 2 H(+). It catalyses the reaction butanoyl-CoA + H2O = S-butanoyl-4'-phosphopantetheine + adenosine 3',5'-bisphosphate + 2 H(+). The enzyme catalyses hexanoyl-CoA + H2O = hexanoyl-4'-phosphopantetheine + adenosine 3',5'-bisphosphate + 2 H(+). It carries out the reaction octanoyl-CoA + H2O = S-octanoyl-4'-phosphopantetheine + adenosine 3',5'-bisphosphate + 2 H(+). The catalysed reaction is propanoyl-CoA + H2O = propanoyl-4'-phosphopantetheine + adenosine 3',5'-bisphosphate + 2 H(+). It catalyses the reaction malonyl-CoA + H2O = malonyl-4'-phosphopantetheine + adenosine 3',5'-bisphosphate + 2 H(+). The enzyme catalyses succinyl-CoA + H2O = succinyl-4'-phosphopantetheine + adenosine 3',5'-bisphosphate + 2 H(+). It carries out the reaction a 5'-end CoA-ribonucleoside in mRNA + H2O = a 5'-end phospho-adenosine-phospho-ribonucleoside in mRNA + (R)-4'-phosphopantetheine + 2 H(+). Its function is as follows. Acyl-CoA diphosphatase that mediates the hydrolysis of a wide range of CoA and CoA esters yielding 3',5'-ADP and the corresponding 4'-phosphopantetheine derivative as products. Hydrolyzes short- and medium-chain acyl-CoAs, exhibiting the highest activity toward free CoA, hexanoyl-CoA, and octanoyl-CoA and the lowest activity against acetyl-CoA. Exhibits decapping activity towards dpCoA-capped RNAs in vitro. The protein is Mitochondrial coenzyme A diphosphatase NUDT8 (NUDT8) of Homo sapiens (Human).